Consider the following 708-residue polypeptide: Solute carrier family 15 member 1 (708 aa).

The chain crosses the membrane as a helical span at residues 1-21 (MGMSKSYGCFGYPLSIFFIVV). Topologically, residues 22 to 53 (NEFCERFSYYGMRALLILYFRRFIGWDDNLST) are extracellular. N-linked (GlcNAc...) asparagine glycosylation occurs at Asn50. The chain crosses the membrane as a helical span at residues 54 to 74 (AIYHTFVALCYLTPILGALIA). Residues 75–82 (DSWLGKFK) are Cytoplasmic-facing. The helical transmembrane segment at 83–103 (TIVSLSIVYTIGQAVTAVSSI) threads the bilayer. Over 104 to 118 (NDLTDYNKDGTPDNL) the chain is Extracellular. Asn117 carries N-linked (GlcNAc...) asparagine glycosylation. A helical transmembrane segment spans residues 119–139 (SVHVALSMIGLALIALGTGGI). Residues 140–161 (KPCVSAFGGDQFEEGQEKQRNR) are Cytoplasmic-facing. The chain crosses the membrane as a helical span at residues 162–182 (FFSIFYLAINAGSLISTIVTP). The Extracellular portion of the chain corresponds to 183–198 (MLRVHECGIYSQKACY). Residues 199-219 (PLAFGVPAALMAVSLIVFVIG) traverse the membrane as a helical segment. Over 220 to 276 (SGMYKKFQPQGNVMGKVVKCIGFALKNRFRHRSKQFPKREHWLDWAKEKYDERLISQ) the chain is Cytoplasmic. Residues 277–297 (IKMVTKVMFLYIPLPMFWALF) traverse the membrane as a helical segment. Over 298 to 327 (DQQGSRWTLQATAMSGKIGLLEVQPDQMQT) the chain is Extracellular. The helical transmembrane segment at 328-348 (VNAILIVVMVPIMDAVVYPLI) threads the bilayer. Residues 349–361 (AKCGFNFTSLKRM) are Cytoplasmic-facing. A helical transmembrane segment spans residues 362–382 (TVGMFLASMAFVMAAIVQLEI). Residues 383–584 (DKTLPVFPKQ…ISPNTVNMAL (202 aa)) lie on the Extracellular side of the membrane. Residues 383 to 585 (DKTLPVFPKQ…SPNTVNMALQ (203 aa)) form an extracellular domain (ECD) region. Residues Asn408, Asn439, Asn495, Asn499, Asn509, Asn514, Asn527, and Asn539 are each glycosylated (N-linked (GlcNAc...) asparagine). The chain crosses the membrane as a helical span at residues 585 to 605 (QIPQYFLITCGEVVFSVTGLE). Residues 606 to 619 (FSYSQAPSNMKSVL) are Cytoplasmic-facing. A helical membrane pass occupies residues 620 to 640 (QAGWLLTVAVGNIIVLIVAGA). The Extracellular portion of the chain corresponds to 641–645 (GQFSE). A helical transmembrane segment spans residues 646–666 (QWAEYILFAALLLVVCVIFAI). Over 667-708 (MARFYTYVNPAEIEAQFDDDEKKNLEKMNVYSTVTPVSQTQM) the chain is Cytoplasmic.

This sequence belongs to the major facilitator superfamily. Proton-dependent oligopeptide transporter (POT/PTR) (TC 2.A.17) family. In terms of assembly, interacts (via extracellular domain region) with trypsin.

The protein localises to the apical cell membrane. The catalysed reaction is a dipeptide(out) + H(+)(out) = a dipeptide(in) + H(+)(in). It catalyses the reaction an L-amino acid tripeptide(out) + H(+)(out) = an L-amino acid tripeptide(in) + H(+)(in). It carries out the reaction L-alanyl-L-lysine(out) + H(+)(out) = L-alanyl-L-lysine(in) + H(+)(in). The enzyme catalyses L-alanyl-L-proline(out) + H(+)(out) = L-alanyl-L-proline(in) + H(+)(in). The catalysed reaction is L-alanyl-L-valine(out) + H(+)(out) = L-alanyl-L-valine(in) + H(+)(in). It catalyses the reaction carnosine(out) + H(+)(out) = carnosine(in) + H(+)(in). It carries out the reaction glycyl-L-glutamine(out) + H(+)(out) = glycyl-L-glutamine(in) + H(+)(in). The enzyme catalyses glycyl-L-leucine(out) + H(+)(out) = glycyl-L-leucine(in) + H(+)(in). The catalysed reaction is glycyl-L-proline(out) + H(+)(out) = glycyl-L-proline(in) + H(+)(in). It catalyses the reaction glycyl-sarcosine(out) + H(+)(out) = glycyl-sarcosine(in) + H(+)(in). It carries out the reaction L-leucyl-L-leucine(out) + H(+)(out) = L-leucyl-L-leucine(in) + H(+)(in). The enzyme catalyses L-leucyl-L-proline(out) + H(+)(out) = L-leucyl-L-proline(in) + H(+)(in). The catalysed reaction is L-phenylalanyl-L-leucine(out) + H(+)(out) = L-phenylalanyl-L-leucine(in) + H(+)(in). It catalyses the reaction L-phenylalanyl-L-phenylalanine(out) + H(+)(out) = L-phenylalanyl-L-phenylalanine(in) + H(+)(in). It carries out the reaction L-lysyl-glycine(out) + H(+)(out) = L-lysyl-glycine(in) + H(+)(in). The enzyme catalyses L-tyrosylglycine(out) + H(+)(out) = L-tyrosylglycine(in) + H(+)(in). The catalysed reaction is L-alanyl-L-aspartate(out) + 2 H(+)(out) = L-alanyl-L-aspartate(in) + 2 H(+)(in). It catalyses the reaction L-aspartyl-glycine(out) + 2 H(+)(out) = L-aspartyl-glycine(in) + 2 H(+)(in). It carries out the reaction glycyl-L-aspartate(out) + 2 H(+)(out) = glycyl-L-aspartate(in) + 2 H(+)(in). The enzyme catalyses glycyl-L-glutamate(out) + 2 H(+)(out) = glycyl-L-glutamate(in) + 2 H(+)(in). The catalysed reaction is L-alanyl-L-leucyl-L-alanine(out) + H(+)(out) = L-alanyl-L-leucyl-L-alanine(in) + H(+)(in). It catalyses the reaction L-alanyl-L-prolylglycine(out) + H(+)(out) = L-alanyl-L-prolylglycine(in) + H(+)(in). It carries out the reaction glycylglycyl-L-isoleucine(out) + H(+)(out) = glycylglycyl-L-isoleucine(in) + H(+)(in). The enzyme catalyses glycylglycyl-L-proline(out) + H(+)(out) = glycylglycyl-L-proline(in) + H(+)(in). The catalysed reaction is L-methionyl-L-phenylalanyl-L-methionine(out) + H(+)(out) = L-methionyl-L-phenylalanyl-L-methionine(in) + H(+)(in). It catalyses the reaction N-acetyl-D-muramoyl-L-alanyl-D-isoglutamine(out) + 2 H(+)(out) = N-acetyl-D-muramoyl-L-alanyl-D-isoglutamine(in) + 2 H(+)(in). It carries out the reaction N(alpha)-formyl-L-methionyl-L-leucyl-L-phenylalanine(out) + 2 H(+)(out) = N(alpha)-formyl-L-methionyl-L-leucyl-L-phenylalanine(in) + 2 H(+)(in). Electrogenic proton-coupled amino-acid transporter that transports oligopeptides of 2 to 4 amino acids with a preference for dipeptides. Transports neutral and monovalently charged peptides with a proton to peptide stoichiometry of 1:1 or 2:1. Primarily responsible for the absorption of dietary di- and tripeptides from the small intestinal lumen. Mediates transepithelial transport of muramyl and N-formylated bacterial dipeptides contributing to recognition of pathogenic bacteria by the mucosal immune system. The protein is Solute carrier family 15 member 1 (SLC15A1) of Canis lupus familiaris (Dog).